We begin with the raw amino-acid sequence, 258 residues long: D-beta-hydroxybutyrate dehydrogenase (258 aa).

6–30 (VITGSTSGIGLAIARTLAKAGANIV) provides a ligand contact to NAD(+). Serine 140 contacts substrate. Tyrosine 153 (proton acceptor) is an active-site residue.

The protein belongs to the short-chain dehydrogenases/reductases (SDR) family.

The enzyme catalyses (R)-3-hydroxybutanoate + NAD(+) = acetoacetate + NADH + H(+). The polypeptide is D-beta-hydroxybutyrate dehydrogenase (bdhA) (Rhizobium meliloti (strain 1021) (Ensifer meliloti)).